An 832-amino-acid polypeptide reads, in one-letter code: MISDISFLQDFAEFIVSKFGKENLRKELKIILPNSLSCTKLKGLLTDNYNVQNLPIIIPFNAIISKKDSSEDYMSKMEELFTLSKIITEYKKLDFTPEEALKAAGILNKLFADLVNNNVDIKLIETYNNSEYWQNIYKFLEYSFLKWQKNEKQSSNNYKLKLLLEEIARTKNSCKQVILAGIFKPDSFLKKYEEELQIIKYNEIKLAHNNIYYYEPTDIYEEAEQIAHICKQNADKKIAIVINNNKLKRIYCNYLDKYELVFEDLIGNDLKLTNVSSLLIAIINILCNNFDLKLLFLLLKNPLINCTNIQELELLLSGKNRFISSPKYLLQLQFDNEELKIYCYNLVDILFTTKPYNIKDILVLSKEIFEKILPDIWEKEGGAELSEFLNNLTEFSGSINVSKKDFPKIFALLLSNVKYYKNIESKIIIGSPEELALSRFDLVILPHFNSDNWSNTTTTHPYLSKEAKQILNIDYDEITPKLYSNYFDLLLQNEEVIILNAKKYAGKLSTPCNLFLKLSNKNVIPNKSVIPQLDCGISGVIFLDSTTSTQDDIEQAAHSTFFPNILSVTDIETLIRNPYGFYAKKILKLRTQDKIWEEPKISDFGNFIHKVLEEYSKNYDQQNMLDQQQALLNIGNNILHSTILPTYTKKTWQTKLTLLSKAFILFDMERRKNCQKIYFEIKGELNLNIAGQNIKIIGIADRIEISKSNCITILDYKTGTIPTKKEIELGLSPQLIIESLMILENGFNISHSYAPLCHSCESGNPIENITIAYVKITSTEPYVQTTEISLSMETLEKHKQGLIRLLEYYVKNKSFVYDLDMSKYNDYLHLRG.

This is an uncharacterized protein from Rickettsia bellii (strain RML369-C).